Here is a 270-residue protein sequence, read N- to C-terminus: Cytochrome c oxidase subunit 3 (270 aa).

7 helical membrane passes run 22-42 (PWPIVVSFSLLSLALSLGLTM), 46-66 (IGEMYLVNLALLVVLGSGVLW), 88-108 (INIGFLLFVLSEVLIFSALFW), 128-148 (VGITAVQPTELPLLNTIILLA), 168-188 (SLSGLLITTWLIIIFVICQYI), 205-225 (VFFAGTGLHFLHMVMLAIMLA), and 248-268 (IIYLHVLDVIWLFLYIVFYWW).

The protein belongs to the cytochrome c oxidase subunit 3 family. In terms of assembly, component of the cytochrome c oxidase (complex IV, CIV), a multisubunit enzyme composed of a catalytic core of 3 subunits and several supernumerary subunits. The complex exists as a monomer or a dimer and forms supercomplexes (SCs) in the inner mitochondrial membrane with ubiquinol-cytochrome c oxidoreductase (cytochrome b-c1 complex, complex III, CIII).

Its subcellular location is the mitochondrion inner membrane. It catalyses the reaction 4 Fe(II)-[cytochrome c] + O2 + 8 H(+)(in) = 4 Fe(III)-[cytochrome c] + 2 H2O + 4 H(+)(out). Component of the cytochrome c oxidase, the last enzyme in the mitochondrial electron transport chain which drives oxidative phosphorylation. The respiratory chain contains 3 multisubunit complexes succinate dehydrogenase (complex II, CII), ubiquinol-cytochrome c oxidoreductase (cytochrome b-c1 complex, complex III, CIII) and cytochrome c oxidase (complex IV, CIV), that cooperate to transfer electrons derived from NADH and succinate to molecular oxygen, creating an electrochemical gradient over the inner membrane that drives transmembrane transport and the ATP synthase. Cytochrome c oxidase is the component of the respiratory chain that catalyzes the reduction of oxygen to water. Electrons originating from reduced cytochrome c in the intermembrane space (IMS) are transferred via the dinuclear copper A center (CU(A)) of subunit 2 and heme A of subunit 1 to the active site in subunit 1, a binuclear center (BNC) formed by heme A3 and copper B (CU(B)). The BNC reduces molecular oxygen to 2 water molecules using 4 electrons from cytochrome c in the IMS and 4 protons from the mitochondrial matrix. In Vanderwaltozyma polyspora (strain ATCC 22028 / DSM 70294 / BCRC 21397 / CBS 2163 / NBRC 10782 / NRRL Y-8283 / UCD 57-17) (Kluyveromyces polysporus), this protein is Cytochrome c oxidase subunit 3 (COX3).